We begin with the raw amino-acid sequence, 345 residues long: N-acetyl-gamma-glutamyl-phosphate reductase (345 aa).

Cys149 is an active-site residue.

This sequence belongs to the NAGSA dehydrogenase family. Type 1 subfamily.

It localises to the cytoplasm. The catalysed reaction is N-acetyl-L-glutamate 5-semialdehyde + phosphate + NADP(+) = N-acetyl-L-glutamyl 5-phosphate + NADPH + H(+). It functions in the pathway amino-acid biosynthesis; L-arginine biosynthesis; N(2)-acetyl-L-ornithine from L-glutamate: step 3/4. In terms of biological role, catalyzes the NADPH-dependent reduction of N-acetyl-5-glutamyl phosphate to yield N-acetyl-L-glutamate 5-semialdehyde. The sequence is that of N-acetyl-gamma-glutamyl-phosphate reductase from Geobacillus stearothermophilus (Bacillus stearothermophilus).